The primary structure comprises 236 residues: Orotidine 5'-phosphate decarboxylase (236 aa).

Residues aspartate 11, lysine 33, 60–69 (DLKLHDIPNT), threonine 119, arginine 181, glutamine 190, glycine 210, and arginine 211 each bind substrate. Lysine 62 (proton donor) is an active-site residue.

The protein belongs to the OMP decarboxylase family. Type 1 subfamily. Homodimer.

It catalyses the reaction orotidine 5'-phosphate + H(+) = UMP + CO2. The protein operates within pyrimidine metabolism; UMP biosynthesis via de novo pathway; UMP from orotate: step 2/2. In terms of biological role, catalyzes the decarboxylation of orotidine 5'-monophosphate (OMP) to uridine 5'-monophosphate (UMP). The chain is Orotidine 5'-phosphate decarboxylase from Cutibacterium acnes (strain DSM 16379 / KPA171202) (Propionibacterium acnes).